An 86-amino-acid chain; its full sequence is MVHICRLFVVMGMLMFLSVQFASSQHWSHGWYPGGKREIDVYDPSEVSEEIKLCNAGKCSFLIPQGRNILKTILLDALTRDFQKRK.

The N-terminal stretch at 1-24 (MVHICRLFVVMGMLMFLSVQFASS) is a signal peptide. Pyrrolidone carboxylic acid is present on Gln-25. Gly-34 carries the post-translational modification Glycine amide.

The protein belongs to the GnRH family. Olfactory bulbs, hypothalamus and telencephalon, midbrain and posterior brain areas.

The protein localises to the secreted. In terms of biological role, stimulates the secretion of gonadotropins. This is Progonadoliberin IIB (gnrh2b) from Carassius auratus (Goldfish).